Here is a 274-residue protein sequence, read N- to C-terminus: NH(3)-dependent NAD(+) synthetase (274 aa).

46 to 53 (GISGGQDS) serves as a coordination point for ATP. Asp52 provides a ligand contact to Mg(2+). Arg140 lines the deamido-NAD(+) pocket. ATP is bound at residue Thr160. A Mg(2+)-binding site is contributed by Glu165. The deamido-NAD(+) site is built by Lys173 and Asp180. 2 residues coordinate ATP: Lys189 and Thr211. A deamido-NAD(+)-binding site is contributed by 260–261 (HK).

The protein belongs to the NAD synthetase family. In terms of assembly, homodimer.

The enzyme catalyses deamido-NAD(+) + NH4(+) + ATP = AMP + diphosphate + NAD(+) + H(+). It participates in cofactor biosynthesis; NAD(+) biosynthesis; NAD(+) from deamido-NAD(+) (ammonia route): step 1/1. Catalyzes the ATP-dependent amidation of deamido-NAD to form NAD. Uses ammonia as a nitrogen source. This chain is NH(3)-dependent NAD(+) synthetase, found in Streptococcus pneumoniae serotype 2 (strain D39 / NCTC 7466).